The primary structure comprises 199 residues: Inner membrane-spanning protein YciB (199 aa).

A run of 6 helical transmembrane segments spans residues 7–27 (HPLF…AANA), 32–52 (FVAT…SYVV), 56–76 (IPLM…LTLV), 93–113 (LFAG…AIMF), 126–146 (VLTL…ELIW), and 153–173 (FWVN…AMMQ).

This sequence belongs to the YciB family.

Its subcellular location is the cell inner membrane. Its function is as follows. Plays a role in cell envelope biogenesis, maintenance of cell envelope integrity and membrane homeostasis. The sequence is that of Inner membrane-spanning protein YciB from Nitrobacter hamburgensis (strain DSM 10229 / NCIMB 13809 / X14).